Reading from the N-terminus, the 193-residue chain is Protein SPEAR3 (193 aa).

Disordered stretches follow at residues 1 to 50 (MGSS…GVAQ) and 85 to 104 (GYPSIPSSSPSFSYASSSPP). The segment covering 14–26 (SSSSSPTSSSSSP) has biased composition (low complexity). The SPL signature appears at 44–52 (RGLGVAQLE). Over residues 86–101 (YPSIPSSSPSFSYASS) the composition is skewed to low complexity. The short motif at 187–193 (LDLELRL) is the EAR element.

Interacts with TPL and the TPR corepressors TPR1, TPR2, TPR3, TPR4, and with the TCP transcription factors TCP2, TCP3, TCP4, TCP5, TCP10, TCP13, TCP17 and TCP24. Interacts with SPL and SPEAR2. As to expression, expressed in shoot apical meristem, cotyledons and leaves. Detected at the leaf margins and in the vascular bundles at the base of the leaves.

The protein resides in the nucleus. In terms of biological role, transcriptional regulator of leaf development. Acts as an adapter-like transcriptional repressor recruiting TPL/TPR corepressors to inhibit the CIN-like TCP transcription factors. In Arabidopsis thaliana (Mouse-ear cress), this protein is Protein SPEAR3.